We begin with the raw amino-acid sequence, 294 residues long: Probable endonuclease 4 (294 aa).

Residues histidine 78, histidine 118, glutamate 157, aspartate 191, histidine 194, histidine 228, aspartate 241, histidine 243, and glutamate 273 each contribute to the Zn(2+) site.

Belongs to the AP endonuclease 2 family. Requires Zn(2+) as cofactor.

It catalyses the reaction Endonucleolytic cleavage to 5'-phosphooligonucleotide end-products.. Its function is as follows. Endonuclease IV plays a role in DNA repair. It cleaves phosphodiester bonds at apurinic or apyrimidinic (AP) sites, generating a 3'-hydroxyl group and a 5'-terminal sugar phosphate. The chain is Probable endonuclease 4 from Streptomyces coelicolor (strain ATCC BAA-471 / A3(2) / M145).